The chain runs to 287 residues: Very long chain fatty acid elongase 4 (287 aa).

3 consecutive transmembrane segments (helical) span residues 33–53, 64–84, and 115–135; these read ILVYCCVLYILLVFMVPEHIM, PFVFWNIGLCLFSFCGAYSCV, and FWVFYFILSKIPEMIDTVFLV. The HxxHH motif motif lies at 145–149; it reads HWYHH. The Nucleophile role is filled by H148. 4 helical membrane passes run 150–170, 172–192, 199–219, and 241–261; these read LTVAIFCWHAGHALIPSGLWF, TMNYCVHSIMYFYYFMCACGM, IAPFITMMQLLQMVAGTLIVL, and LGLVMYGSYFFLFAVLFGKLY.

It belongs to the ELO family.

The protein resides in the membrane. It carries out the reaction a very-long-chain acyl-CoA + malonyl-CoA + H(+) = a very-long-chain 3-oxoacyl-CoA + CO2 + CoA. Functionally, involved in the synthesis of fatty acids. Elongates C16:0 and C18:0 fatty acids to C26:0, with C24:0 being the main product. This chain is Very long chain fatty acid elongase 4, found in Trypanosoma cruzi (strain CL Brener).